We begin with the raw amino-acid sequence, 266 residues long: Small ribosomal subunit protein uS2 (266 aa).

Belongs to the universal ribosomal protein uS2 family.

The polypeptide is Small ribosomal subunit protein uS2 (Corynebacterium diphtheriae (strain ATCC 700971 / NCTC 13129 / Biotype gravis)).